We begin with the raw amino-acid sequence, 207 residues long: Alpha-1-acid glycoprotein 1 (207 aa).

The first 18 residues, M1–A18, serve as a signal peptide directing secretion. Q19 carries the pyrrolidone carboxylic acid modification. N-linked (GlcNAc...) asparagine glycosylation is found at N25, N34, N76, N94, and N104. The cysteines at positions 91 and 184 are disulfide-linked.

It belongs to the calycin superfamily. Lipocalin family. In terms of tissue distribution, expressed by the liver and secreted in plasma.

It is found in the secreted. In terms of biological role, functions as a transport protein in the blood stream. Binds various ligands in the interior of its beta-barrel domain. Appears to function in modulating the activity of the immune system during the acute-phase reaction. In Mus caroli (Ryukyu mouse), this protein is Alpha-1-acid glycoprotein 1 (Orm1).